A 406-amino-acid chain; its full sequence is Plasma serine protease inhibitor (406 aa).

Residues 1–19 (MQLFLLLCLVLLSPQGASL) form the signal peptide. Positions 20–25 (HRHHPR) are cleaved as a propeptide — removed in mature form. An O-linked (GalNAc...) threonine glycan is attached at threonine 39. 3 N-linked (GlcNAc...) asparagine glycosylation sites follow: asparagine 249, asparagine 262, and asparagine 338.

It belongs to the serpin family. In terms of assembly, forms protease inhibiting heterodimers in extracellular body fluids with serine proteases such as activated protein C/coagulation factor V/F5, acrosin/ACR, chymotrypsinogen B/CTRB1, prothrombin/F2, factor Xa/F10, factor XI/F11, kallikrein/KLKB1, tissue kallikrein, trypsin/PRSS1, prostate specific antigen/KLK3, tissue plasminogen activator/PLAT and urinary plasminogen activator/PLAU. Forms membrane-anchored serine proteases inhibiting heterodimers with TMPRSS7 and TMPRSS11E. Interacts with SEMG2. Post-translationally, N- and O-glycosylated. N-glycosylation consists of a mixture of sialylated bi- (including sialyl-Lewis X epitopes), tri- and tetra-antennary complex-type chains; affects the maximal heparin- and thrombomodulin-enhanced rates of thrombin inhibition. O-glycosylated with core 1 or possibly core 8 glycans. Further modified with 2 sialic acid residues. In terms of processing, proteolytically cleaved. Inhibition of proteases is accompanied by formation of a stable enzyme-inhibitor complex and by degradation of the serpin to lower molecular weight derivatives. Proteolytically cleaved at the N-terminus; inhibits slightly the heparin- and thrombomodulin-enhanced rates of thrombin inhibition. Predominantly expressed in the epithelium of seminal vesicles. Expressed in the proximal tubular epithelium of the kidney. Expressed in the superficial and more differentiated epidermal keratinocytes of the skin. Expressed in megakaryocytes and platelets. Expressed poorly in kidney tumor cells compared to non tumor kidney tissues. Expressed in spermatozoa. Present in very high concentration in seminal plasma. Present in high concentration in plasma, synovial and Graaf follicle fluids. Present in low concentration in breast milk and in amniotic fluids. Present in very low concentration in urine, cerebrospinal fluids, saliva and tears (at protein level). Strongly expressed in liver. Expressed in kidney, spleen, pancreas, skeletal muscle, heart, testes, ovary, interstitial Leydig cells, epididymal glands, seminal vesicles and prostate.

It is found in the secreted. The protein resides in the extracellular space. Its activity is regulated as follows. Its inhibitory activity is greatly enhanced in the presence of glycosaminoglycans, heparin, thrombomodulin and phospholipids vesicles. Heparin-dependent serine protease inhibitor acting in body fluids and secretions. Inactivates serine proteases by binding irreversibly to their serine activation site. Involved in the regulation of intravascular and extravascular proteolytic activities. Plays hemostatic roles in the blood plasma. Acts as a procoagulant and pro-inflammatory factor by inhibiting the anticoagulant activated protein C factor as well as the generation of activated protein C factor by the thrombin/thrombomodulin complex. Acts as an anticoagulant factor by inhibiting blood coagulation factors like prothrombin, factor XI, factor Xa, plasma kallikrein and fibrinolytic enzymes such as tissue- and urinary-type plasminogen activators. In seminal plasma, inactivates several serine proteases implicated in the reproductive system. Inhibits the serpin acrosin; indirectly protects component of the male genital tract from being degraded by excessive released acrosin. Inhibits tissue- and urinary-type plasminogen activator, prostate-specific antigen and kallikrein activities; has a control on the sperm motility and fertilization. Inhibits the activated protein C-catalyzed degradation of SEMG1 and SEMG2; regulates the degradation of semenogelin during the process of transfer of spermatozoa from the male reproductive tract into the female tract. In urine, inhibits urinary-type plasminogen activator and kallikrein activities. Inactivates membrane-anchored serine proteases activities such as MPRSS7 and TMPRSS11E. Inhibits urinary-type plasminogen activator-dependent tumor cell invasion and metastasis. May also play a non-inhibitory role in seminal plasma and urine as a hydrophobic hormone carrier by its binding to retinoic acid. The protein is Plasma serine protease inhibitor (SERPINA5) of Homo sapiens (Human).